A 514-amino-acid polypeptide reads, in one-letter code: Putative fucosyltransferase 10 (514 aa).

5 N-linked (GlcNAc...) asparagine glycosylation sites follow: asparagine 185, asparagine 210, asparagine 355, asparagine 377, and asparagine 456.

Belongs to the glycosyltransferase 37 family. Expressed in root, leaves, stems and seedlings.

The protein localises to the golgi apparatus. Its pathway is protein modification; protein glycosylation. Functionally, may be involved in cell wall biosynthesis. May act as a fucosyltransferase. This is Putative fucosyltransferase 10 (FUT10) from Arabidopsis thaliana (Mouse-ear cress).